We begin with the raw amino-acid sequence, 263 residues long: Protein MARD1 (263 aa).

The segment at 219–263 (SFLSRCFTCKKNLDQKQDIYIYRGEKGFCSSECRYQEMLLDQMET) adopts an FLZ-type zinc-finger fold.

Belongs to the FLZ family. As to quaternary structure, interacts with KIN10 and KIN11 via its FLZ-type zinc finger domain. Interacts with KINB1 and KINB2 via its N-terminal part. Interacts with TZF4, TZF5 and TZF6. Interacts with MPK3 and MPK6.

The protein localises to the cytoplasm. The protein resides in the stress granule. It localises to the P-body. In terms of biological role, may act as an adapter to facilitate the interaction of SnRK1 complex with effector proteins, conferring tissue- and stimulus-type specific differences in the SnRK1 regulation pathway. Involved in seed dormancy control. This Arabidopsis thaliana (Mouse-ear cress) protein is Protein MARD1.